The primary structure comprises 124 residues: Small ribosomal subunit protein uS12 (124 aa).

The residue at position 89 (Asp89) is a 3-methylthioaspartic acid. The segment at 105 to 124 (AGVKDRRQSRSKYGAKRPKA) is disordered. The span at 113 to 124 (SRSKYGAKRPKA) shows a compositional bias: basic residues.

Belongs to the universal ribosomal protein uS12 family. In terms of assembly, part of the 30S ribosomal subunit. Contacts proteins S8 and S17. May interact with IF1 in the 30S initiation complex.

Its function is as follows. With S4 and S5 plays an important role in translational accuracy. Functionally, interacts with and stabilizes bases of the 16S rRNA that are involved in tRNA selection in the A site and with the mRNA backbone. Located at the interface of the 30S and 50S subunits, it traverses the body of the 30S subunit contacting proteins on the other side and probably holding the rRNA structure together. The combined cluster of proteins S8, S12 and S17 appears to hold together the shoulder and platform of the 30S subunit. The sequence is that of Small ribosomal subunit protein uS12 (rpsL) from Synechococcus elongatus (strain ATCC 33912 / PCC 7942 / FACHB-805) (Anacystis nidulans R2).